A 243-amino-acid chain; its full sequence is UPF0246 protein M28_Spy1772 (243 aa).

Belongs to the UPF0246 family.

This Streptococcus pyogenes serotype M28 (strain MGAS6180) protein is UPF0246 protein M28_Spy1772.